We begin with the raw amino-acid sequence, 206 residues long: MAIKHLPKILIARKNKAEVNHCDLKRRVSIKIIYGLGNPGSAFVKSRHSLGKLMVSMYADSMAFPKNWPSTKENLTLVLSTSYMNDSGKQLKKISNDFVRKVSPLDKIVYVVVHDELELDLGKVKLRLPGGSHRGHNGIRSCQEFLGKESFYRIGLGIGRCESRNREDVSDYVLSKFNSNEMKLIETDIFHKFCNILQQLQLSIET.

The Proton acceptor role is filled by His-48. The tRNA site is built by Tyr-83, Asn-85, and Asn-137.

The protein belongs to the PTH family.

Its subcellular location is the mitochondrion. It catalyses the reaction an N-acyl-L-alpha-aminoacyl-tRNA + H2O = an N-acyl-L-amino acid + a tRNA + H(+). Functionally, peptidyl-tRNA hydrolase involved in the recycling of tRNA-Lys from diacetyl-lysyl-tRNA-Lys and is important for mitochondrial function. This Schizosaccharomyces pombe (strain 972 / ATCC 24843) (Fission yeast) protein is Probable peptidyl-tRNA hydrolase (pth1).